The primary structure comprises 297 residues: MAPSNLPPVFNATSQDMEMLLAAQCHLGSKNLQVHMDPYLWKTRPDGINVINIGKTWEKIVLAARIIAAIDNPADICVISARPYGQRAVLKFAAHTGAVAIAGRFTPGSFTNYITRSFKEPRLIIVTDPRTDAQAIKEASYVNIPVIALCDTDSPTEYVDVAIPTNNKGRHAIGLVWWLLAREVLRLRGTLATRETEWDVVVDLYFYRDPEAEEAKELEEAKAAGVDEIGPGAVESGFGAEGWEASAGTAFGAAAATTTTTNPATATATWEATGGDWASSAPAEGWAGEAPATEAKW.

The tract at residues 276-297 (DWASSAPAEGWAGEAPATEAKW) is disordered.

This sequence belongs to the universal ribosomal protein uS2 family. In terms of assembly, component of the small ribosomal subunit. Mature ribosomes consist of a small (40S) and a large (60S) subunit. The 40S subunit contains about 33 different proteins and 1 molecule of RNA (18S). The 60S subunit contains about 49 different proteins and 3 molecules of RNA (25S, 5.8S and 5S). Interacts with RPS21.

It is found in the cytoplasm. Functionally, required for the assembly and/or stability of the 40S ribosomal subunit. Required for the processing of the 20S rRNA-precursor to mature 18S rRNA in a late step of the maturation of 40S ribosomal subunits. This chain is Small ribosomal subunit protein uS2, found in Uncinocarpus reesii (strain UAMH 1704).